Here is a 447-residue protein sequence, read N- to C-terminus: Adenylosuccinate synthetase (447 aa).

Residues 12 to 18 (GDEGKGK) and 40 to 42 (GHT) contribute to the GTP site. The active-site Proton acceptor is the aspartate 13. Residues aspartate 13 and glycine 40 each coordinate Mg(2+). IMP-binding positions include 13 to 16 (DEGK), 38 to 41 (NAGH), threonine 128, arginine 142, glutamine 223, threonine 238, and arginine 302. The Proton donor role is filled by histidine 41. Residue 298–304 (TTTGRKR) participates in substrate binding. GTP is bound by residues arginine 304, 330–332 (KLD), and 412–414 (SLG).

It belongs to the adenylosuccinate synthetase family. In terms of assembly, homodimer. The cofactor is Mg(2+).

It localises to the cytoplasm. It carries out the reaction IMP + L-aspartate + GTP = N(6)-(1,2-dicarboxyethyl)-AMP + GDP + phosphate + 2 H(+). Its pathway is purine metabolism; AMP biosynthesis via de novo pathway; AMP from IMP: step 1/2. Its function is as follows. Plays an important role in the de novo pathway of purine nucleotide biosynthesis. Catalyzes the first committed step in the biosynthesis of AMP from IMP. This chain is Adenylosuccinate synthetase, found in Trichormus variabilis (strain ATCC 29413 / PCC 7937) (Anabaena variabilis).